A 163-amino-acid chain; its full sequence is Meiotically up-regulated gene 109 protein (163 aa).

4 consecutive transmembrane segments (helical) span residues 61 to 78, 82 to 104, 114 to 134, and 136 to 156; these read YRFY…FFIW, ALLA…SLTI, YSIP…APVG, and LFWS…LTTY.

Its subcellular location is the membrane. In terms of biological role, has a role in meiosis. This is Meiotically up-regulated gene 109 protein (mug109) from Schizosaccharomyces pombe (strain 972 / ATCC 24843) (Fission yeast).